Here is a 318-residue protein sequence, read N- to C-terminus: MIDLSPLARRLAGTPLAEWANTLQVQLDKKMEKGHGDLERWQSALDALPKIQPTEVDLLDGLKLDTNCDDETRAQMRTALMGLSPWRKGPFDLFGVHVDTEWRSDWKWSRVSPHLDLKGKRILDVGCGNGYYMWRMLGAGADSVIGVDPNWLFFCQFQAVQRYLSEPNAWHLPFPFEDLPPNLEGFDTVFSMGVFYHRRSPIEHLLALKDCLVKGGELVLETLVVEGDKHQVLVPEDRYAQMRNVWFLPSVPALELWLRRAGFTDVRCVDVSMTTVDEQRGTEWMKYQSLSDFLDPDDHSKTIEGLPAPMRAVIVAKK.

Carboxy-S-adenosyl-L-methionine contacts are provided by K88, W102, K107, G126, M192, Y196, and R311.

Belongs to the class I-like SAM-binding methyltransferase superfamily. CmoB family. Homotetramer.

It carries out the reaction carboxy-S-adenosyl-L-methionine + 5-hydroxyuridine(34) in tRNA = 5-carboxymethoxyuridine(34) in tRNA + S-adenosyl-L-homocysteine + H(+). In terms of biological role, catalyzes carboxymethyl transfer from carboxy-S-adenosyl-L-methionine (Cx-SAM) to 5-hydroxyuridine (ho5U) to form 5-carboxymethoxyuridine (cmo5U) at position 34 in tRNAs. The sequence is that of tRNA U34 carboxymethyltransferase from Pseudomonas fluorescens (strain Pf0-1).